The primary structure comprises 238 residues: SPbeta prophage-derived uncharacterized protein YorM (238 aa).

The signal sequence occupies residues 1-37 (MFKKLIDKHKKYVYHRINKMALFATIGLLGVGLVYSA). Residues 111–121 (TKTKKVQKTNT) show a composition bias toward basic residues. Positions 111 to 132 (TKTKKVQKTNTKRNLDKAVSKS) are disordered.

The chain is SPbeta prophage-derived uncharacterized protein YorM (yorM) from Bacillus subtilis (strain 168).